The sequence spans 374 residues: Alanine racemase (374 aa).

Lys-35 serves as the catalytic Proton acceptor; specific for D-alanine. Position 35 is an N6-(pyridoxal phosphate)lysine (Lys-35). Arg-130 provides a ligand contact to substrate. Tyr-261 functions as the Proton acceptor; specific for L-alanine in the catalytic mechanism. Met-309 is a binding site for substrate.

Belongs to the alanine racemase family. Pyridoxal 5'-phosphate is required as a cofactor.

It carries out the reaction L-alanine = D-alanine. It functions in the pathway amino-acid biosynthesis; D-alanine biosynthesis; D-alanine from L-alanine: step 1/1. Functionally, catalyzes the interconversion of L-alanine and D-alanine. May also act on other amino acids. The sequence is that of Alanine racemase (alr) from Albidiferax ferrireducens (strain ATCC BAA-621 / DSM 15236 / T118) (Rhodoferax ferrireducens).